Reading from the N-terminus, the 272-residue chain is HMP-PP phosphatase (272 aa).

The active-site Nucleophile is Asp-8. Positions 8, 10, and 212 each coordinate Mg(2+).

This sequence belongs to the HAD-like hydrolase superfamily. Cof family. Mg(2+) serves as cofactor.

The enzyme catalyses 4-amino-2-methyl-5-(diphosphooxymethyl)pyrimidine + H2O = 4-amino-2-methyl-5-(phosphooxymethyl)pyrimidine + phosphate + H(+). Catalyzes the hydrolysis of 4-amino-2-methyl-5-hydroxymethylpyrimidine pyrophosphate (HMP-PP) to 4-amino-2-methyl-5-hydroxymethylpyrimidine phosphate (HMP-P). The protein is HMP-PP phosphatase of Escherichia coli (strain UTI89 / UPEC).